We begin with the raw amino-acid sequence, 90 residues long: Acylphosphatase (90 aa).

Positions 4–90 constitute an Acylphosphatase-like domain; sequence TRRVRFYGRV…TEFQDFQIKR (87 aa). Active-site residues include Arg-19 and Asn-37.

Belongs to the acylphosphatase family.

It catalyses the reaction an acyl phosphate + H2O = a carboxylate + phosphate + H(+). This Thermoplasma volcanium (strain ATCC 51530 / DSM 4299 / JCM 9571 / NBRC 15438 / GSS1) protein is Acylphosphatase (acyP).